Reading from the N-terminus, the 222-residue chain is Transmembrane protein 54 (222 aa).

The next 4 helical transmembrane spans lie at 22-42 (LVLVVLGHVSFITAALFHGTV), 62-82 (ILSVTSAIVVITSGIAAIVLS), 100-120 (ACALLSLTCALGLLASIAMTF), and 155-175 (SSLCLWGIALVLCVAENVFAV).

The protein belongs to the TMEM54 family. Ubiquitously expressed in cancer cell lines.

The protein localises to the membrane. This Homo sapiens (Human) protein is Transmembrane protein 54 (TMEM54).